A 464-amino-acid chain; its full sequence is MAAAAASSCGGAGCGPHCSSSASAAAVEDAAAAAAEKVGRLSLSRECGKCGGGAAAVAVAGGLGLCGECFRANLLGKFKLAVTSNAMVRPTDSVLLAFSGGPASRVALQFIHEMRCKAIESWDVSNSQALPVFGVGVAFVDESVLCSKPRDEIEMAIEDIRSIVSSLSTGVKAMHIARLEDVFSTESEDGERRLREAVDMIGDDTGREDFLRCLRMLSLQKIAMENGYAKIMLGSCASAIACHVLSATVKGQGYSLPADVQYVDTRWEIPVVLPLRDCLAQELTLLCELDSLKTQQHLDRPSNGINSLVASFIKRLREENPSREHTIVRTAQKLKPFSFNKFSADGYHDFLPSRLRPKFQKFDSDESTFSEILCLMCGSPFSESELQNLESTKHKAQKKIDLYTAHCCQSCYFQILPAGENLNEHFFSLLPKLWTGKMDTISDSHSLLRDQIEEYLLEENDDGN.

It belongs to the CTU2/NCS2 family.

The protein resides in the cytoplasm. Its pathway is tRNA modification; 5-methoxycarbonylmethyl-2-thiouridine-tRNA biosynthesis. Functionally, plays a central role in 2-thiolation of mcm(5)S(2)U at tRNA wobble positions of tRNA(Lys), tRNA(Glu) and tRNA(Gln). May act by forming a heterodimer with NCS6/CTU1 that ligates sulfur from thiocarboxylated URM1 onto the uridine of tRNAs at wobble position. This chain is Cytoplasmic tRNA 2-thiolation protein 2, found in Oryza sativa subsp. japonica (Rice).